A 315-amino-acid polypeptide reads, in one-letter code: Intradiol ring-cleavage dioxygenase prcA (315 aa).

4 residues coordinate Fe cation: Tyr-166, Tyr-200, His-224, and His-226. The segment at Lys-287 to Leu-315 is disordered. Over residues Arg-304 to Leu-315 the composition is skewed to basic and acidic residues.

The protein belongs to the intradiol ring-cleavage dioxygenase family. As to quaternary structure, homodimer. Fe(3+) is required as a cofactor.

It carries out the reaction 3,4-dihydroxybenzoate + O2 = 3-carboxy-cis,cis-muconate + 2 H(+). Functionally, intradiol ring-cleavage dioxygenase; part of the benzoic acid degradation pathway also known as the protocatechuic acid pathway. Benzoic acid debradation begins with the conversion of benzoic acid into 4-hydroxybenzoic acid through hydroxylation by the benzoate-4-monooxygenase bphA, and its partner NADPH-cytochrome P450 reductase cprA which act as a mediator in electron donation from NADPH. 4-Hydroxybenzoic acid is then converted into 3,4-dihydroxybenzoic acid (also called protocatechuic acid) by the p-hydroxybenzoate-m-hydroxylase phhA. Protocatechuic acid is converted into 3-carboxy-cis,cis-muconic acid by the intradiol ring-cleavage dioxygenase prcA, which is further metabolized through the 3-oxoadipate pathway to finally enter the tricarboxylic acid cycle (TCA). The protein is Intradiol ring-cleavage dioxygenase prcA of Aspergillus niger (strain ATCC MYA-4892 / CBS 513.88 / FGSC A1513).